The sequence spans 180 residues: Crossover junction endodeoxyribonuclease RuvC (180 aa).

Active-site residues include aspartate 13, glutamate 73, and aspartate 145. Mg(2+)-binding residues include aspartate 13, glutamate 73, and aspartate 145.

It belongs to the RuvC family. Homodimer which binds Holliday junction (HJ) DNA. The HJ becomes 2-fold symmetrical on binding to RuvC with unstacked arms; it has a different conformation from HJ DNA in complex with RuvA. In the full resolvosome a probable DNA-RuvA(4)-RuvB(12)-RuvC(2) complex forms which resolves the HJ. Mg(2+) serves as cofactor.

It localises to the cytoplasm. It catalyses the reaction Endonucleolytic cleavage at a junction such as a reciprocal single-stranded crossover between two homologous DNA duplexes (Holliday junction).. The RuvA-RuvB-RuvC complex processes Holliday junction (HJ) DNA during genetic recombination and DNA repair. Endonuclease that resolves HJ intermediates. Cleaves cruciform DNA by making single-stranded nicks across the HJ at symmetrical positions within the homologous arms, yielding a 5'-phosphate and a 3'-hydroxyl group; requires a central core of homology in the junction. The consensus cleavage sequence is 5'-(A/T)TT(C/G)-3'. Cleavage occurs on the 3'-side of the TT dinucleotide at the point of strand exchange. HJ branch migration catalyzed by RuvA-RuvB allows RuvC to scan DNA until it finds its consensus sequence, where it cleaves and resolves the cruciform DNA. The chain is Crossover junction endodeoxyribonuclease RuvC from Magnetococcus marinus (strain ATCC BAA-1437 / JCM 17883 / MC-1).